We begin with the raw amino-acid sequence, 635 residues long: ADP-ribosylation factor-binding protein GGA1 (635 aa).

At Met1 the chain carries N-acetylmethionine. One can recognise a VHS domain in the interval 17–147 (ATNPLNKELN…MLKKQGIVKS (131 aa)). The interaction with ARF3 stretch occupies residues 114-273 (KILELLYSWT…RLASDTEDND (160 aa)). Residues 171 to 298 (DEEKSKMLAR…VINLYKQLVR (128 aa)) enclose the GAT domain. A Phosphoserine modification is found at Ser185. Residues 299 to 505 (GEEVNGDATA…ITVPLESIKP (207 aa)) form a unstructured hinge region. Positions 305-349 (DATASSIPGSTSALLDLSGLDLPPPGTTQPATPTRPGNQSSPEQL) are disordered. Residues 313–325 (GSTSALLDLSGLD) show a composition bias toward low complexity. Ser354 is modified (phosphoserine). The Autoinhibitory motif lies at 357–361 (DDELM). Disordered stretches follow at residues 362 to 422 (SLGL…LDDL) and 455 to 490 (RDLQ…TPTE). Over residues 383–393 (NFQSSDGTESS) the composition is skewed to polar residues. Ser417 is subject to Phosphoserine. Residues 459–476 (SKSSSPSPGAASLLHTTS) are compositionally biased toward low complexity. The segment covering 477–486 (PEPPGPPPQA) has biased composition (pro residues). The 122-residue stretch at 506-627 (SSILPVTVYD…NEMGDVDQFP (122 aa)) folds into the GAE domain.

The protein belongs to the GGA protein family. Monomer. Interacts with GGA2 and GGA3. Binds to clathrin and activated ARFs, including ARF1, ARF5 and ARF6. Interacts with RABEP1 and RABGEF1. Interacts with the type-I membrane proteins LRP3, M6PR/CD-MPR and IGF2R/CI-MPR. Interacts (via N-terminal VHS domain) with SORL1/sorLA and SORT1 (via C-terminal cytosolic domain). Interacts with EPN4. Interacts with CCDC91. Interacts with HEATR5B/p200a. Interacts with SYNRG/gamma-synergin. Interacts (via GAE doamin) with NECAP1 and NECAP2. Interacts (via GAE domain) with AFTPH/aftiphilin. Interacts with TSG101 and UBC. Interacts with RNF11. Interacts (via VHS domain) with BACE1 (via DXXLL motif); the interaction highly increases when BACE1 is phosphorylated at 'Ser-498'. Interacts with CNST. Interacts with ADRA2B. Interacts with ARL3; the interaction recruits, in collaboration with RABEP1, PKD1:PKD2 complex to trans-Golgi network and is required for ciliary targeting. Post-translationally, phosphorylated by CK2 and dephosphorylated by PP2A. Phosphorylation of GGA1 allows the internal DXXLL motif to bind the VHS domain and to inhibit the recognition of cargo signals. Ubiquitinated.

Its subcellular location is the golgi apparatus. The protein localises to the trans-Golgi network membrane. It is found in the endosome membrane. The protein resides in the early endosome membrane. Functionally, plays a role in protein sorting and trafficking between the trans-Golgi network (TGN) and endosomes. Mediates the ARF-dependent recruitment of clathrin to the TGN and binds ubiquitinated proteins and membrane cargo molecules with a cytosolic acidic cluster-dileucine (DXXLL) motif. Mediates export of the GPCR receptor ADRA2B to the cell surface. Required for targeting PKD1:PKD2 complex from the trans-Golgi network to the cilium membrane. Regulates retrograde transport of proteins such as phosphorylated form of BACE1 from endosomes to the trans-Golgi network. This is ADP-ribosylation factor-binding protein GGA1 (Gga1) from Mus musculus (Mouse).